A 325-amino-acid chain; its full sequence is NADH-quinone oxidoreductase subunit H (325 aa).

The next 8 membrane-spanning stretches (helical) occupy residues 11–31 (ILISIVKAVVILLVVVTCGAF), 81–101 (VIFTLAPMIAFTSLLLAFAIV), 114–134 (IGILFFLMMAGLAVYAVLFAG), 149–169 (ASAQTLSYEVFIGLSLMGVVA), 186–206 (MWNVIPQFFGFITFAIAGVAV), 237–257 (FFVGEYIGIVTVSALIVTLFF), 265–285 (LPPFVWFALKTAFFMMMFILI), and 304–324 (VCLPLTLLNLLATAAVILYNA).

It belongs to the complex I subunit 1 family. NDH-1 is composed of 13 different subunits. Subunits NuoA, H, J, K, L, M, N constitute the membrane sector of the complex.

It is found in the cell inner membrane. It carries out the reaction a quinone + NADH + 5 H(+)(in) = a quinol + NAD(+) + 4 H(+)(out). Its function is as follows. NDH-1 shuttles electrons from NADH, via FMN and iron-sulfur (Fe-S) centers, to quinones in the respiratory chain. The immediate electron acceptor for the enzyme in this species is believed to be ubiquinone. Couples the redox reaction to proton translocation (for every two electrons transferred, four hydrogen ions are translocated across the cytoplasmic membrane), and thus conserves the redox energy in a proton gradient. This subunit may bind ubiquinone. This chain is NADH-quinone oxidoreductase subunit H, found in Serratia proteamaculans (strain 568).